A 1602-amino-acid chain; its full sequence is Calmodulin-regulated spectrin-associated protein 1 (1602 aa).

In terms of domain architecture, Calponin-homology (CH) spans 216-331; it reads ESPAHQKVRY…FIAELFWWFE (116 aa). Residues Ser217, Ser371, Ser375, Ser416, and Ser431 each carry the phosphoserine modification. Residues 426–471 form a disordered region; that stretch reads QKQQKSIQGEDIPDQRHRSNSLTRVDGQPRGAAIAWPEKKTRPASQ. Thr512 carries the phosphothreonine modification. A phosphoserine mark is found at Ser563, Ser575, and Ser589. Basic and acidic residues predominate over residues 603–620; it reads AKEKQVITKEDERGEGRP. The disordered stretch occupies residues 603 to 637; it reads AKEKQVITKEDERGEGRPRSIVSRRPSEGPQPLVR. Phosphoserine is present on residues Ser629, Ser722, Ser728, Ser738, and Ser740. A compositionally biased stretch (basic and acidic residues) spans 772-789; the sequence is KLQEDMKVKEHEDKDDAS. Disordered regions lie at residues 772 to 808 and 825 to 870; these read KLQE…VSMA and LNSC…GKDP. 2 stretches are compositionally biased toward low complexity: residues 797–808 and 830–841; these read STASQMSSVSMA and TKSSTSSSQKTT. The span at 857 to 869 shows a compositional bias: basic and acidic residues; that stretch reads QKREQSPSQHGKD. A sufficient for interaction with SPTBN1 region spans residues 871 to 892; the sequence is ASLLASELVQLHMQLEEKRRAI. Coiled-coil stretches lie at residues 873 to 909 and 1016 to 1048; these read LLAS…QRLK and DVNE…QEQL. The tract at residues 903–922 is sufficient for interaction with calmodulin; the sequence is SARQRLKLGKAAFLHVVKKG. 3 disordered regions span residues 1075 to 1165, 1206 to 1226, and 1301 to 1448; these read FVEP…GKCL, KEVG…VEEP, and ARVR…DWET. A Phosphoserine modification is found at Ser1080. Residues 1103-1114 show a composition bias toward basic and acidic residues; it reads RPAELKVPKDRP. The span at 1115–1127 shows a compositional bias: polar residues; the sequence is QGSSRSKTPTPSV. Residues 1206-1220 show a composition bias toward low complexity; the sequence is KEVGSSSSDVSGKES. A coiled-coil region spans residues 1291–1343; sequence LLKQQRKAEEARVRKQQLEAEVELKRDEARRKAEEDRVRKEEEKARRELIKQE. Over residues 1301–1346 the composition is skewed to basic and acidic residues; it reads ARVRKQQLEAEVELKRDEARRKAEEDRVRKEEEKARRELIKQEYLR. A compositionally biased stretch (basic residues) spans 1361–1372; sequence PKSKPKKPRPKS. Residues 1380–1392 are compositionally biased toward polar residues; that stretch reads SDSGTKCSSTPDN. Residues 1393–1410 show a composition bias toward low complexity; sequence LSRTQSGSSLSLASAATT. Phosphoserine occurs at positions 1398 and 1427. Positions 1463–1597 constitute a CKK domain; it reads GPKLFKEPSS…QPKRPAVPKK (135 aa). At Tyr1537 the chain carries Phosphotyrosine.

Belongs to the CAMSAP1 family. In terms of assembly, interacts with spectrin via SPTBN1; the interaction is direct. Interacts with calmodulin; calcium-dependent it prevents interaction with spectrin.

Its subcellular location is the cytoplasm. It is found in the cytoskeleton. Functionally, key microtubule-organizing protein that specifically binds the minus-end of non-centrosomal microtubules and regulates their dynamics and organization. Specifically recognizes growing microtubule minus-ends and stabilizes microtubules. Acts on free microtubule minus-ends that are not capped by microtubule-nucleating proteins or other factors and protects microtubule minus-ends from depolymerization. In contrast to CAMSAP2 and CAMSAP3, tracks along the growing tips of minus-end microtubules without significantly affecting the polymerization rate: binds at the very tip of the microtubules minus-end and acts as a minus-end tracking protein (-TIP) that dissociates from microtubules after allowing tubulin incorporation. Through interaction with spectrin may regulate neurite outgrowth. The protein is Calmodulin-regulated spectrin-associated protein 1 (CAMSAP1) of Homo sapiens (Human).